Consider the following 118-residue polypeptide: V-type proton ATPase subunit G 3 (118 aa).

The segment at 1–34 is disordered; sequence MTSQSQGIHQLLQAEKRAKDKLEEAKKRKGKRLK. Residues 5-54 adopt a coiled-coil conformation; the sequence is SQGIHQLLQAEKRAKDKLEEAKKRKGKRLKQAKEEAMVEIDQYRMQRDKE. A compositionally biased stretch (basic and acidic residues) spans 14–26; that stretch reads AEKRAKDKLEEAK.

The protein belongs to the V-ATPase G subunit family. As to quaternary structure, V-ATPase is a heteromultimeric enzyme made up of two complexes: the ATP-hydrolytic V1 complex and the proton translocation V0 complex. The V1 complex consists of three catalytic AB heterodimers that form a heterohexamer, three peripheral stalks each consisting of EG heterodimers, one central rotor including subunits D and F, and the regulatory subunits C and H. The proton translocation complex V0 consists of the proton transport subunit a, a ring of proteolipid subunits c9c'', rotary subunit d, subunits e and f, and the accessory subunits ATP6AP1/Ac45 and ATP6AP2/PRR. Kidney.

Functionally, subunit of the V1 complex of vacuolar(H+)-ATPase (V-ATPase), a multisubunit enzyme composed of a peripheral complex (V1) that hydrolyzes ATP and a membrane integral complex (V0) that translocates protons. V-ATPase is responsible for acidifying and maintaining the pH of intracellular compartments and in some cell types, is targeted to the plasma membrane, where it is responsible for acidifying the extracellular environment. This chain is V-type proton ATPase subunit G 3 (ATP6V1G3), found in Homo sapiens (Human).